A 209-amino-acid polypeptide reads, in one-letter code: Translation initiation factor 2 subunit beta (209 aa).

The TRAM domain occupies 144–202; that stretch reads TIEEGKEYVVEITEVGSSGEGRTNYKGYTIFVPGAKRGETVKVRIKKVKNDVAIGEIIE.

The protein belongs to the eIF-2-beta/eIF-5 family. Heterotrimer composed of an alpha, a beta and a gamma chain.

Its function is as follows. eIF-2 functions in the early steps of protein synthesis by forming a ternary complex with GTP and initiator tRNA. The polypeptide is Translation initiation factor 2 subunit beta (eif2b) (Thermoplasma acidophilum (strain ATCC 25905 / DSM 1728 / JCM 9062 / NBRC 15155 / AMRC-C165)).